Reading from the N-terminus, the 78-residue chain is Large ribosomal subunit protein bL28 (78 aa).

The disordered stretch occupies residues 1–20 (MSRVCQVTGKGPVTGNNISH).

The protein belongs to the bacterial ribosomal protein bL28 family.

The chain is Large ribosomal subunit protein bL28 from Pseudomonas putida (strain W619).